The sequence spans 1163 residues: Leptin receptor (1163 aa).

The first 21 residues, 1-21 (MICQKFCVVLLHWEFICVITA), serve as a signal peptide directing secretion. Over 22–837 (FNLSYPITPW…QDNTEKHQND (816 aa)) the chain is Extracellular. 7 N-linked (GlcNAc...) asparagine glycosylation sites follow: asparagine 23, asparagine 41, asparagine 56, asparagine 71, asparagine 79, asparagine 96, and asparagine 114. Cystine bridges form between cysteine 37–cysteine 88 and cysteine 87–cysteine 97. 2 cysteine pairs are disulfide-bonded: cysteine 129–cysteine 140 and cysteine 184–cysteine 194. N-linked (GlcNAc...) asparagine glycosylation is found at asparagine 185, asparagine 204, asparagine 274, asparagine 345, and asparagine 395. In terms of domain architecture, Fibronectin type-III 1 spans 237–331 (PPLGLRMEIT…TPHVFTTQDV (95 aa)). 2 disulfides stabilise this stretch: cysteine 350–cysteine 410 and cysteine 411–cysteine 416. A glycan (N-linked (GlcNAc...) asparagine) is linked at asparagine 431. 3 disulfide bridges follow: cysteine 434–cysteine 445, cysteine 471–cysteine 526, and cysteine 486–cysteine 496. The tract at residues 465-482 (RRSSLYCFDIPSIHPISK) is leptin-binding. Fibronectin type-III domains are found at residues 537-632 (PPSS…TVVM), 637-730 (PMRG…LTFS), and 738-831 (IVQS…QDNT). The WSXWS motif motif lies at 620–624 (WSNWS). 7 N-linked (GlcNAc...) asparagine glycosylation sites follow: asparagine 622, asparagine 657, asparagine 668, asparagine 686, asparagine 695, asparagine 726, and asparagine 748. The chain crosses the membrane as a helical span at residues 838–860 (AGLYVIVPVIISSSILLLGTLLI). At 861 to 1163 (LHQRMKKLFW…MENKMCDLTV (303 aa)) the chain is on the cytoplasmic side. Positions 869–877 (FWEDVPNPK) match the Box 1 motif motif. Serine 880 carries the post-translational modification Phosphoserine. Positions 891–896 (ETFEHL) are required for JAK2 activation. Residues 896 to 904 (LFIKHTASV) form a required for STAT3 phosphorylation region. Tyrosine 984 bears the Phosphotyrosine; by JAK2 mark. Tyrosine 1077 carries the post-translational modification Phosphotyrosine. Tyrosine 1139 bears the Phosphotyrosine; by JAK2 mark.

The protein belongs to the type I cytokine receptor family. Type 2 subfamily. Present as a mixture of monomers and dimers. The phosphorylated receptor binds a number of SH2 domain-containing proteins such as JAK2, STAT3, PTPN11, and SOCS3. Interaction with SOCS3 inhibits JAK/STAT signaling and MAPK cascade. On ligand binding, phosphorylated on two conserved C-terminal tyrosine residues (isoform B only) by JAK2. Tyr-984 is required for complete binding and activation of PTPN11, ERK/FOS activation and, for interaction with SOCS3. Phosphorylation on Tyr-1139 is required for STAT3 binding/activation. Post-translationally, on ligand binding, phosphorylated on two conserved C-terminal tyrosine residues (isoform B only) by JAK2. Tyr-984 is required for complete binding and activation of PTPN11, ERK/FOS activation,for interaction with SOCS3 and SOCS3 mediated inhibition of leptin signaling. Phosphorylation on Tyr-1139 is required for STAT3 binding/activation. Phosphorylation of Tyr-1077 has a more accessory role. Widely expressed. High expression of isoform B in liver, adipose tissue, hypothalamus and choroid plexus.

Its subcellular location is the cell membrane. The protein resides in the basolateral cell membrane. In terms of biological role, receptor for hormone LEP/leptin. On ligand binding, mediates LEP central and peripheral effects through the activation of different signaling pathways such as JAK2/STAT3 and MAPK cascade/FOS. In the hypothalamus, LEP acts as an appetite-regulating factor that induces a decrease in food intake and an increase in energy consumption by inducing anorexinogenic factors and suppressing orexigenic neuropeptides, also regulates bone mass and secretion of hypothalamo-pituitary-adrenal hormones. In the periphery, increases basal metabolism, influences reproductive function, regulates pancreatic beta-cell function and insulin secretion, is pro-angiogenic and affects innate and adaptive immunity. Control of energy homeostasis and melanocortin production (stimulation of POMC and full repression of AgRP transcription) is mediated by STAT3 signaling, whereas distinct signals regulate NPY and the control of fertility, growth and glucose homeostasis. Involved in the regulation of counter-regulatory response to hypoglycemia by inhibiting neurons of the parabrachial nucleus. Has a specific effect on T lymphocyte responses, differentially regulating the proliferation of naive and memory T-cells. Leptin increases Th1 and suppresses Th2 cytokine production. Functionally, may transport LEP across the blood-brain barrier. Binds LEP and mediates LEP endocytosis. Does not induce phosphorylation of and activate STAT3. The sequence is that of Leptin receptor (LEPR) from Macaca mulatta (Rhesus macaque).